Here is a 203-residue protein sequence, read N- to C-terminus: Histidine biosynthesis bifunctional protein HisIE (203 aa).

Positions Met-1–Phe-114 are phosphoribosyl-AMP cyclohydrolase. A phosphoribosyl-ATP pyrophosphohydrolase region spans residues Leu-115 to Gln-203.

It in the N-terminal section; belongs to the PRA-CH family. This sequence in the C-terminal section; belongs to the PRA-PH family.

Its subcellular location is the cytoplasm. It carries out the reaction 1-(5-phospho-beta-D-ribosyl)-ATP + H2O = 1-(5-phospho-beta-D-ribosyl)-5'-AMP + diphosphate + H(+). It catalyses the reaction 1-(5-phospho-beta-D-ribosyl)-5'-AMP + H2O = 1-(5-phospho-beta-D-ribosyl)-5-[(5-phospho-beta-D-ribosylamino)methylideneamino]imidazole-4-carboxamide. The protein operates within amino-acid biosynthesis; L-histidine biosynthesis; L-histidine from 5-phospho-alpha-D-ribose 1-diphosphate: step 2/9. It functions in the pathway amino-acid biosynthesis; L-histidine biosynthesis; L-histidine from 5-phospho-alpha-D-ribose 1-diphosphate: step 3/9. The chain is Histidine biosynthesis bifunctional protein HisIE (hisI) from Escherichia coli (strain K12).